The chain runs to 158 residues: SsrA-binding protein (158 aa).

The protein belongs to the SmpB family.

The protein resides in the cytoplasm. In terms of biological role, required for rescue of stalled ribosomes mediated by trans-translation. Binds to transfer-messenger RNA (tmRNA), required for stable association of tmRNA with ribosomes. tmRNA and SmpB together mimic tRNA shape, replacing the anticodon stem-loop with SmpB. tmRNA is encoded by the ssrA gene; the 2 termini fold to resemble tRNA(Ala) and it encodes a 'tag peptide', a short internal open reading frame. During trans-translation Ala-aminoacylated tmRNA acts like a tRNA, entering the A-site of stalled ribosomes, displacing the stalled mRNA. The ribosome then switches to translate the ORF on the tmRNA; the nascent peptide is terminated with the 'tag peptide' encoded by the tmRNA and targeted for degradation. The ribosome is freed to recommence translation, which seems to be the essential function of trans-translation. This is SsrA-binding protein from Roseiflexus sp. (strain RS-1).